The sequence spans 821 residues: Integrator complex assembly factor BRAT1 (821 aa).

A required for interaction with NDFIP1 region spans residues Pro-100 to Asp-200. 2 HEAT repeats span residues Pro-495–Trp-531 and Ser-544–Gly-576. The interval Gly-741–Gln-767 is disordered. Position 742 is a phosphoserine (Ser-742). Residues Asp-819–Tyr-821 carry the BRAT1-like motif motif. Cys-820 is a binding site for Zn(2+).

It belongs to the BRAT1 family. In terms of assembly, part of the multiprotein complex composed of BRAT1, WDR73, as well as integrator complex subunits INTS9 and INTS11. Interacts with BRCA1 and ATM. Interacts with MTOR and RPTOR. Interacts with NDFIP1. Interacts with SMC1A and PRKDC. In terms of processing, ubiquitinated by NEDD4, NEDD4L and ITCH; mono- and polyubiquitinated forms are detected. As to expression, ubiquitously expressed.

Its subcellular location is the nucleus. The protein localises to the cytoplasm. Functionally, component of a multiprotein complex required for the assembly of the RNA endonuclease module of the integrator complex. Associates with INTS9 and INTS11 in the cytoplasm and blocks the active site of INTS11 to inhibit the endonuclease activity of INTS11 before formation of the full integrator complex. Following dissociation of WDR73 of the complex, BRAT1 facilitates the nuclear import of the INTS9-INTS11 heterodimer. In the nucleus, INTS4 is integrated to the INTS9-INTS11 heterodimer and BRAT1 is released from the mature RNA endonuclease module by inositol hexakisphosphate (InsP6). BRAT1 is also involved in DNA damage response; activates kinases ATM, SMC1A and PRKDC by modulating their phosphorylation status following ionizing radiation (IR) stress. Plays a role in regulating mitochondrial function and cell proliferation. Required for protein stability of MTOR and MTOR-related proteins, and cell cycle progress by growth factors. This is Integrator complex assembly factor BRAT1 from Homo sapiens (Human).